The chain runs to 469 residues: RuvB-like helicase 2 (469 aa).

73–80 (GEPGTGKT) contacts ATP.

It belongs to the RuvB family. As to quaternary structure, forms homohexameric rings. May form a dodecamer with rvb1 made of two stacked hexameric rings. Component of the chromatin remodeling Ino80 complex. Component of the RNA polymerase II holoenzyme complex.

Its subcellular location is the nucleus. It carries out the reaction ATP + H2O = ADP + phosphate + H(+). In terms of biological role, has double-stranded DNA-stimulated ATPase and ATP-dependent DNA helicase (5' to 3') activity suggesting a role in nuclear processes such as recombination and transcription. Functionally, proposed core component of the chromatin remodeling Ino80 complex which is involved in transcriptional regulation, DNA replication and probably DNA repair. In Dictyostelium discoideum (Social amoeba), this protein is RuvB-like helicase 2 (rvb2).